The chain runs to 233 residues: Small ribosomal subunit protein uS2 (233 aa).

It belongs to the universal ribosomal protein uS2 family.

In Prochlorococcus marinus (strain MIT 9312), this protein is Small ribosomal subunit protein uS2.